The chain runs to 497 residues: MREIVTLQLGQLSNYTATHFWNAQESYFTYSSDEKSLIDHNVHWRAGLGADGSETFLPRTVIYDLKGGFGSLRKINALYEAESESAPEALWSGQSVVHKQTPITPSEYQQSLDAGSEPAQLTTSNVRYWSDFSRVYFHPKSLNQLYDFELNSTTMPFERFSMGTELFSMLDREHDLADRDFRPFAEECDRMQGIQVFTTIDDAWGGFTSSYLESLRDDFPKTTIWTWGLQSPLLDISRAKRQLRLVNTAHSIEQLCTQSTTVVPLALPEEDMTTSVSMDRRSPWHTSALMAAAIETATLPSRLTQGSSEQAGSLDVLAESLNVNGNQPLASMRMSLAPAKDSPEDSRINVDFFQVGRVWSRQHVARLDTHKHVFGEILSYRDLDPLGHDNENGHLAPGERPIIGNSIVRKYDSALRFPLLDAYPQIYPQLAGNSDASLQTTLSTNSSIVQRIRTLRTESARLVPVNEREDLGNGLADLADAYQEGWFSGSDEDDDDL.

This sequence belongs to the misato family.

It is found in the mitochondrion. In terms of biological role, involved in the partitioning of the mitochondrial organelle and mitochondrial DNA (mtDNA) inheritance. This Gibberella zeae (strain ATCC MYA-4620 / CBS 123657 / FGSC 9075 / NRRL 31084 / PH-1) (Wheat head blight fungus) protein is Protein DML1 (DML1).